We begin with the raw amino-acid sequence, 177 residues long: Large ribosomal subunit protein uL6 (177 aa).

The protein belongs to the universal ribosomal protein uL6 family. In terms of assembly, part of the 50S ribosomal subunit.

Its function is as follows. This protein binds to the 23S rRNA, and is important in its secondary structure. It is located near the subunit interface in the base of the L7/L12 stalk, and near the tRNA binding site of the peptidyltransferase center. This is Large ribosomal subunit protein uL6 from Tolumonas auensis (strain DSM 9187 / NBRC 110442 / TA 4).